Reading from the N-terminus, the 1088-residue chain is Methionine S-methyltransferase (1088 aa).

This sequence belongs to the class I-like SAM-binding methyltransferase superfamily. Homotetramer. As to expression, expressed in the shoot, scutellum, and aleurone cells but not in the root or endosperm.

The protein resides in the cytoplasm. It carries out the reaction L-methionine + S-adenosyl-L-methionine = S-methyl-L-methionine + S-adenosyl-L-homocysteine. In terms of biological role, catalyzes the S-methylmethionine (SMM) biosynthesis from adenosyl-L-homocysteine (AdoMet) and methionine. SMM biosynthesis (by MMT1) and degradation (by HMT-1, HMT-2 and HMT-3) constitute the SMM cycle in plants, which is probably required to achieve short term control of AdoMet level. Also able to catalyze the selenium-methylmethionine (SeMM) from AdoMet and selenium-methionine (SeMet). May play a role in phoem sulfur transport; such function is however not essential. This is Methionine S-methyltransferase (MMT1) from Hordeum vulgare (Barley).